The chain runs to 291 residues: MEMO1 family protein TON_0132 (291 aa).

This sequence belongs to the MEMO1 family.

This Thermococcus onnurineus (strain NA1) protein is MEMO1 family protein TON_0132.